The sequence spans 263 residues: MKKIHPSAVIEEGAQLGDDVVIEAYAYVGKDTKIGNDVVIKQGARILSDTTIGDHSRVFSYAIVGDIPQDISYKEEQKSGVVIGKNATIREFATINSGTAKGDGFTRIGDNAFIMAYCHIAHDCLLGNNIILANNATLAGHVELGDFTVVGGLTPIHQFVKVGEGCMIAGASALSQDIVPFCLAEGNRASIRSLNLVGTRRRFDKDEVDRLSRAFKTLFRQGDLKENAKNLLENQESENVKKMCHFILETKRGIPVYRGKNNA.

It belongs to the transferase hexapeptide repeat family. LpxA subfamily. As to quaternary structure, homotrimer.

It localises to the cytoplasm. The catalysed reaction is a (3R)-hydroxyacyl-[ACP] + UDP-N-acetyl-alpha-D-glucosamine = a UDP-3-O-[(3R)-3-hydroxyacyl]-N-acetyl-alpha-D-glucosamine + holo-[ACP]. It functions in the pathway glycolipid biosynthesis; lipid IV(A) biosynthesis; lipid IV(A) from (3R)-3-hydroxytetradecanoyl-[acyl-carrier-protein] and UDP-N-acetyl-alpha-D-glucosamine: step 1/6. Its function is as follows. Involved in the biosynthesis of lipid A, a phosphorylated glycolipid that anchors the lipopolysaccharide to the outer membrane of the cell. This is Acyl-[acyl-carrier-protein]--UDP-N-acetylglucosamine O-acyltransferase from Campylobacter jejuni subsp. jejuni serotype O:23/36 (strain 81-176).